We begin with the raw amino-acid sequence, 585 residues long: Serine protease HtrA-like (585 aa).

The segment at 1-184 (MDNNKKQVIP…QPKDKDNDNT (184 aa)) is disordered. Over residues 21–82 (YFHNVEREER…IHQQRDDKSY (62 aa)) the composition is skewed to basic and acidic residues. Polar residues predominate over residues 84–94 (QKTLNQNNQMN). A compositionally biased stretch (basic and acidic residues) spans 95–113 (KSKDDDNKIGEESLHDVRV). Over residues 114–124 (SSDTSTLPHQN) the composition is skewed to polar residues. Positions 126–139 (SIKDYDDSGNESKQ) are enriched in basic and acidic residues. Residues 151-175 (GVNSNHTEQDSRSTQPYSSKHSYSQ) show a composition bias toward polar residues. The helical transmembrane segment at 224-244 (MLIIIGIIVLLLILNAIFTTV) threads the bilayer. Catalysis depends on charge relay system residues H320, D350, and S435. Residues 516-575 (GVLIGEVKENGLGDKAGLKKGDVIVELDGKKIEDNLRYRQVIYSHYDDQKTITAKIYRNG) enclose the PDZ domain.

The protein belongs to the peptidase S1C family.

The protein resides in the cell membrane. This is Serine protease HtrA-like from Staphylococcus epidermidis (strain ATCC 35984 / DSM 28319 / BCRC 17069 / CCUG 31568 / BM 3577 / RP62A).